Here is a 156-residue protein sequence, read N- to C-terminus: 6,7-dimethyl-8-ribityllumazine synthase (156 aa).

5-amino-6-(D-ribitylamino)uracil contacts are provided by residues Phe-22, 57–59 (AYE), and 81–83 (TVI). 86 to 87 (GT) contacts (2S)-2-hydroxy-3-oxobutyl phosphate. Residue His-89 is the Proton donor of the active site. Phe-114 is a binding site for 5-amino-6-(D-ribitylamino)uracil. Residue Arg-128 participates in (2S)-2-hydroxy-3-oxobutyl phosphate binding.

Belongs to the DMRL synthase family. Forms an icosahedral capsid composed of 60 subunits, arranged as a dodecamer of pentamers.

It catalyses the reaction (2S)-2-hydroxy-3-oxobutyl phosphate + 5-amino-6-(D-ribitylamino)uracil = 6,7-dimethyl-8-(1-D-ribityl)lumazine + phosphate + 2 H2O + H(+). It functions in the pathway cofactor biosynthesis; riboflavin biosynthesis; riboflavin from 2-hydroxy-3-oxobutyl phosphate and 5-amino-6-(D-ribitylamino)uracil: step 1/2. Catalyzes the formation of 6,7-dimethyl-8-ribityllumazine by condensation of 5-amino-6-(D-ribitylamino)uracil with 3,4-dihydroxy-2-butanone 4-phosphate. This is the penultimate step in the biosynthesis of riboflavin. The chain is 6,7-dimethyl-8-ribityllumazine synthase from Yersinia pseudotuberculosis serotype O:1b (strain IP 31758).